Reading from the N-terminus, the 181-residue chain is ATP synthase subunit delta (181 aa).

This sequence belongs to the ATPase delta chain family. As to quaternary structure, F-type ATPases have 2 components, F(1) - the catalytic core - and F(0) - the membrane proton channel. F(1) has five subunits: alpha(3), beta(3), gamma(1), delta(1), epsilon(1). F(0) has three main subunits: a(1), b(2) and c(10-14). The alpha and beta chains form an alternating ring which encloses part of the gamma chain. F(1) is attached to F(0) by a central stalk formed by the gamma and epsilon chains, while a peripheral stalk is formed by the delta and b chains.

The protein resides in the cell inner membrane. F(1)F(0) ATP synthase produces ATP from ADP in the presence of a proton or sodium gradient. F-type ATPases consist of two structural domains, F(1) containing the extramembraneous catalytic core and F(0) containing the membrane proton channel, linked together by a central stalk and a peripheral stalk. During catalysis, ATP synthesis in the catalytic domain of F(1) is coupled via a rotary mechanism of the central stalk subunits to proton translocation. Its function is as follows. This protein is part of the stalk that links CF(0) to CF(1). It either transmits conformational changes from CF(0) to CF(1) or is implicated in proton conduction. This is ATP synthase subunit delta from Fervidobacterium nodosum (strain ATCC 35602 / DSM 5306 / Rt17-B1).